A 501-amino-acid polypeptide reads, in one-letter code: MAKIDIDQIGALIQKQIEDYKADVRLESIGKVLSVADGIATVYGLSQAILGELVELPHDVKGLVFNLEQFHVGIILFGRTDLIKEGDNVRATKKIFEVPVGEDLLGRVVDPLGNPLDLKGTINADAYYPIERPAKDLMHRGFINEPLHTGIKVIDALVPIGKGQRELIIGDRQTGKSTIAIDTIINQRGKNVICVYVAIGQKDSTIANLVKLLQIKDALDYTVIINAGASKEATLLYIAPYTGSSIAEYFMEQGKDVLIIYDDLSKHAVAYRELSLLMKRPSGREAYPGDIFYLHSRLLERAGKLSKEHGGGSITALPIVETQAGDISAYIPTNIISITDGQLYLEQKLFYQGVRPAINAGLSVSRVGGSAQWKAMKQVAGTLRISLANFRELESFAQFGSDLDPSSKRRLDRGRKTVEILKQDVHELIDMPSQIVTFYALENGFMDDLNLKQIRSLMAEIEQGLSLNETGKKLRKELVEHKAIKDKALMELFIDHVRRFI.

170-177 (GDRQTGKS) serves as a coordination point for ATP.

Belongs to the ATPase alpha/beta chains family. In terms of assembly, F-type ATPases have 2 components, CF(1) - the catalytic core - and CF(0) - the membrane proton channel. CF(1) has five subunits: alpha(3), beta(3), gamma(1), delta(1), epsilon(1). CF(0) has three main subunits: a(1), b(2) and c(9-12). The alpha and beta chains form an alternating ring which encloses part of the gamma chain. CF(1) is attached to CF(0) by a central stalk formed by the gamma and epsilon chains, while a peripheral stalk is formed by the delta and b chains.

Its subcellular location is the cell membrane. The catalysed reaction is ATP + H2O + 4 H(+)(in) = ADP + phosphate + 5 H(+)(out). In terms of biological role, produces ATP from ADP in the presence of a proton gradient across the membrane. The alpha chain is a regulatory subunit. This Acholeplasma laidlawii (strain PG-8A) protein is ATP synthase subunit alpha.